The sequence spans 143 residues: General odorant-binding protein 28a (143 aa).

A signal peptide spans 1 to 21; sequence MQSTPIILVAIVLLGAALVRA. 3 cysteine pairs are disulfide-bonded: cysteine 38–cysteine 69, cysteine 65–cysteine 123, and cysteine 113–cysteine 132.

As to expression, expressed in antenna, mostly on the medial and posterior surface of the third antennal segment.

The protein localises to the secreted. The sequence is that of General odorant-binding protein 28a (Obp28a) from Drosophila melanogaster (Fruit fly).